A 948-amino-acid chain; its full sequence is Phosphoenolpyruvate carboxylase (948 aa).

Active-site residues include His138 and Lys610.

Belongs to the PEPCase type 1 family. It depends on Mg(2+) as a cofactor.

It carries out the reaction oxaloacetate + phosphate = phosphoenolpyruvate + hydrogencarbonate. Its function is as follows. Forms oxaloacetate, a four-carbon dicarboxylic acid source for the tricarboxylic acid cycle. The sequence is that of Phosphoenolpyruvate carboxylase from Streptococcus sanguinis (strain SK36).